A 65-amino-acid chain; its full sequence is MPKLKTKSSAAKRFKKTGKGGFKHRCANRAHINTKMTTKRKRHLRGMNQVAKVDTTSLVQQMPYA.

The tract at residues 1-25 is disordered; the sequence is MPKLKTKSSAAKRFKKTGKGGFKHR.

The protein belongs to the bacterial ribosomal protein bL35 family.

The polypeptide is Large ribosomal subunit protein bL35 (Francisella tularensis subsp. holarctica (strain FTNF002-00 / FTA)).